A 349-amino-acid polypeptide reads, in one-letter code: Peroxisomal acyl-coenzyme A thioester hydrolase 1 (349 aa).

Residues Asp-259, Ser-282, and Gln-333 each act as charge relay system in the active site. The short motif at 347-349 (AKF) is the Microbody targeting signal element.

This sequence belongs to the C/M/P thioester hydrolase family.

It localises to the peroxisome. The enzyme catalyses hexadecanoyl-CoA + H2O = hexadecanoate + CoA + H(+). Acyl-coenzyme A (acyl-CoA) thioesterases are a group of enzymes that catalyze the hydrolysis of acyl-CoAs to the free fatty acid and coenzyme A (CoASH), providing the potential to regulate intracellular levels of acyl-CoAs, free fatty acids and CoASH. Contributes to growth on fatty acids. In Saccharomyces cerevisiae (strain ATCC 204508 / S288c) (Baker's yeast), this protein is Peroxisomal acyl-coenzyme A thioester hydrolase 1 (TES1).